The sequence spans 151 residues: 6,7-dimethyl-8-ribityllumazine synthase (151 aa).

Residues F15, 49–51, and 73–75 each bind 5-amino-6-(D-ribitylamino)uracil; these read AVE and AVI. 78 to 79 serves as a coordination point for (2S)-2-hydroxy-3-oxobutyl phosphate; it reads ET. The active-site Proton donor is the H81. Residue F106 coordinates 5-amino-6-(D-ribitylamino)uracil. R120 provides a ligand contact to (2S)-2-hydroxy-3-oxobutyl phosphate.

Belongs to the DMRL synthase family. Forms an icosahedral capsid composed of 60 subunits, arranged as a dodecamer of pentamers.

The catalysed reaction is (2S)-2-hydroxy-3-oxobutyl phosphate + 5-amino-6-(D-ribitylamino)uracil = 6,7-dimethyl-8-(1-D-ribityl)lumazine + phosphate + 2 H2O + H(+). It participates in cofactor biosynthesis; riboflavin biosynthesis; riboflavin from 2-hydroxy-3-oxobutyl phosphate and 5-amino-6-(D-ribitylamino)uracil: step 1/2. Its function is as follows. Catalyzes the formation of 6,7-dimethyl-8-ribityllumazine by condensation of 5-amino-6-(D-ribitylamino)uracil with 3,4-dihydroxy-2-butanone 4-phosphate. This is the penultimate step in the biosynthesis of riboflavin. This chain is 6,7-dimethyl-8-ribityllumazine synthase, found in Coxiella burnetii (strain Dugway 5J108-111).